The following is a 236-amino-acid chain: Enolase-phosphatase E1 (236 aa).

It belongs to the HAD-like hydrolase superfamily. MasA/MtnC family. As to quaternary structure, monomer. The cofactor is Mg(2+).

It carries out the reaction 5-methylsulfanyl-2,3-dioxopentyl phosphate + H2O = 1,2-dihydroxy-5-(methylsulfanyl)pent-1-en-3-one + phosphate. The protein operates within amino-acid biosynthesis; L-methionine biosynthesis via salvage pathway; L-methionine from S-methyl-5-thio-alpha-D-ribose 1-phosphate: step 3/6. It participates in amino-acid biosynthesis; L-methionine biosynthesis via salvage pathway; L-methionine from S-methyl-5-thio-alpha-D-ribose 1-phosphate: step 4/6. Functionally, bifunctional enzyme that catalyzes the enolization of 2,3-diketo-5-methylthiopentyl-1-phosphate (DK-MTP-1-P) into the intermediate 2-hydroxy-3-keto-5-methylthiopentenyl-1-phosphate (HK-MTPenyl-1-P), which is then dephosphorylated to form the acireductone 1,2-dihydroxy-3-keto-5-methylthiopentene (DHK-MTPene). The chain is Enolase-phosphatase E1 from Frankia alni (strain DSM 45986 / CECT 9034 / ACN14a).